The sequence spans 185 residues: Ribosome-recycling factor (185 aa).

This sequence belongs to the RRF family.

It localises to the cytoplasm. Functionally, responsible for the release of ribosomes from messenger RNA at the termination of protein biosynthesis. May increase the efficiency of translation by recycling ribosomes from one round of translation to another. The polypeptide is Ribosome-recycling factor (Pseudoalteromonas atlantica (strain T6c / ATCC BAA-1087)).